A 434-amino-acid chain; its full sequence is Zinc carboxypeptidase (434 aa).

Residues M1–A33 form the signal peptide. A propeptide spans K34–Q114 (activation peptide). Residues G122–S423 enclose the Peptidase M14 domain. The Zn(2+) site is built by H183 and E186. A disordered region spans residues G270 to H295. A compositionally biased stretch (basic residues) spans A282–H293. A Zn(2+)-binding site is contributed by H315. The active-site Proton donor/acceptor is E388.

It belongs to the peptidase M14 family. Requires Zn(2+) as cofactor.

It catalyses the reaction Releases a C-terminal residue, which may be hydrophobic or positively charged.. Its function is as follows. Carboxypeptidase that possesses the specificities of both mammalian Cpase A and B. Thus shows broad substrate specificity, being able to cleave Cbz-Gly-Leu, Cbz-Gly-Val, Cbz-Gly-Phe, Cbz-Gly-Lys and Bz-Gly-Arg in vitro. The sequence is that of Zinc carboxypeptidase from Saccharothrix mutabilis subsp. capreolus (Streptomyces capreolus).